The sequence spans 127 residues: Large-conductance mechanosensitive channel (127 aa).

Helical transmembrane passes span 9–29, 32–52, and 75–95; these read EFAM…GVAF, IVTA…LGGI, and VIDF…INLL.

The protein belongs to the MscL family. As to quaternary structure, homopentamer.

It localises to the cell inner membrane. Channel that opens in response to stretch forces in the membrane lipid bilayer. May participate in the regulation of osmotic pressure changes within the cell. The protein is Large-conductance mechanosensitive channel of Legionella pneumophila subsp. pneumophila (strain Philadelphia 1 / ATCC 33152 / DSM 7513).